The sequence spans 130 residues: Small ribosomal subunit protein eS6 (130 aa).

Positions 78-98 (SGPPGFRPERKGERRRKTVRG) are disordered.

It belongs to the eukaryotic ribosomal protein eS6 family.

This is Small ribosomal subunit protein eS6 from Methanopyrus kandleri (strain AV19 / DSM 6324 / JCM 9639 / NBRC 100938).